The primary structure comprises 305 residues: Maximins-S type B/C (305 aa).

The signal sequence occupies residues 1 to 18 (MNFNYFILVLFFITSGHA). 2 propeptides span residues 19–35 (KSET…HIKR) and 52–65 (SAEE…LVTR). Residue Asn-83 is modified to Asparagine amide. A propeptide spanning residues 87–100 (SAEEQDLAEHLVTR) is cleaved from the precursor. Residue Asn-118 is modified to Asparagine amide. Residues 122–135 (SAEEQDLAEDLVTR) constitute a propeptide that is removed on maturation. The residue at position 153 (Lys-153) is a Lysine amide. Positions 157–170 (SAEDQDLAEDLVTR) are excised as a propeptide. Asn-188 carries the post-translational modification Asparagine amide. Residues 192–205 (SAEEQDLAEHLVTR) constitute a propeptide that is removed on maturation. At Asn-223 the chain carries Asparagine amide. Positions 227 to 240 (SAEEQDLSEDLVTR) are excised as a propeptide. Asn-258 bears the Asparagine amide mark. A propeptide spanning residues 262–275 (SAEEQDLVEDLVTR) is cleaved from the precursor. Lysine amide is present on Lys-293. The propeptide occupies 297–305 (SAEQEKDMK).

This sequence belongs to the maximin-S family. In terms of tissue distribution, expressed by the skin dorsal glands.

Its subcellular location is the secreted. In terms of biological role, maximin-S1 has no antimicrobial activity. Has no hemolytic activity. Maximin-S2 has an activity against mycoplasma but has no activity against common Gram-positive and Gram-negative bacteria nor fungi. Has no hemolytic activity. Functionally, maximin-S3 has an activity against mycoplasma but has no activity against common Gram-positive and Gram-negative bacteria nor fungi. Has no hemolytic activity. Its function is as follows. Maximin-S4 has an activity against mycoplasma but has no activity against common Gram-positive and Gram-negative bacteria nor fungi. Has no hemolytic activity. In terms of biological role, maximin-S5 has an activity against mycoplasma but has no activity against common Gram-positive and Gram-negative bacteria nor fungi. Has no hemolytic activity. The sequence is that of Maximins-S type B/C from Bombina maxima (Giant fire-bellied toad).